Consider the following 509-residue polypeptide: Lysine--tRNA ligase (509 aa).

The Mg(2+) site is built by Glu418 and Glu425.

It belongs to the class-II aminoacyl-tRNA synthetase family. Homodimer. Mg(2+) is required as a cofactor.

The protein localises to the cytoplasm. It carries out the reaction tRNA(Lys) + L-lysine + ATP = L-lysyl-tRNA(Lys) + AMP + diphosphate. This Acinetobacter baumannii (strain AB307-0294) protein is Lysine--tRNA ligase.